The following is a 431-amino-acid chain: Histidinol dehydrogenase (431 aa).

Residues tyrosine 124, glutamine 187, and asparagine 210 each contribute to the NAD(+) site. Positions 236, 258, and 261 each coordinate substrate. Residues glutamine 258 and histidine 261 each contribute to the Zn(2+) site. Active-site proton acceptor residues include glutamate 325 and histidine 326. Substrate-binding residues include histidine 326, aspartate 359, glutamate 413, and histidine 418. Residue aspartate 359 participates in Zn(2+) binding. Histidine 418 is a binding site for Zn(2+).

It belongs to the histidinol dehydrogenase family. It depends on Zn(2+) as a cofactor.

The enzyme catalyses L-histidinol + 2 NAD(+) + H2O = L-histidine + 2 NADH + 3 H(+). The protein operates within amino-acid biosynthesis; L-histidine biosynthesis; L-histidine from 5-phospho-alpha-D-ribose 1-diphosphate: step 9/9. Its function is as follows. Catalyzes the sequential NAD-dependent oxidations of L-histidinol to L-histidinaldehyde and then to L-histidine. This is Histidinol dehydrogenase from Legionella pneumophila (strain Paris).